We begin with the raw amino-acid sequence, 91 residues long: Putative pterin-4-alpha-carbinolamine dehydratase (91 aa).

The protein belongs to the pterin-4-alpha-carbinolamine dehydratase family.

It catalyses the reaction (4aS,6R)-4a-hydroxy-L-erythro-5,6,7,8-tetrahydrobiopterin = (6R)-L-erythro-6,7-dihydrobiopterin + H2O. The sequence is that of Putative pterin-4-alpha-carbinolamine dehydratase from Halobacterium salinarum (strain ATCC 29341 / DSM 671 / R1).